The sequence spans 183 residues: BLOC-1-related complex subunit 8 homolog (183 aa).

The tract at residues 152–183 (MIGPGTATGRTEAQAATSSNPGELQRSYTTLH) is disordered. The span at 159–183 (TGRTEAQAATSSNPGELQRSYTTLH) shows a compositional bias: polar residues.

Belongs to the BORCS8 family.

It localises to the lysosome membrane. May participate in the coupling of lysosomes to microtubule plus-end-directed kinesin motor. This is BLOC-1-related complex subunit 8 homolog from Drosophila melanogaster (Fruit fly).